The chain runs to 198 residues: Recombination protein RecR (198 aa).

Residues 57–72 form a C4-type zinc finger; sequence CSSCGHITDKDPCYIC. A Toprim domain is found at 80 to 175; the sequence is SIICVVQDPK…KITRIAHGLP (96 aa).

The protein belongs to the RecR family.

Functionally, may play a role in DNA repair. It seems to be involved in an RecBC-independent recombinational process of DNA repair. It may act with RecF and RecO. This chain is Recombination protein RecR, found in Anoxybacillus flavithermus (strain DSM 21510 / WK1).